We begin with the raw amino-acid sequence, 587 residues long: Formate--tetrahydrofolate ligase (587 aa).

73–80 (TPLGEGKS) is a binding site for ATP.

It belongs to the formate--tetrahydrofolate ligase family.

The catalysed reaction is (6S)-5,6,7,8-tetrahydrofolate + formate + ATP = (6R)-10-formyltetrahydrofolate + ADP + phosphate. Its pathway is one-carbon metabolism; tetrahydrofolate interconversion. In Desulfosudis oleivorans (strain DSM 6200 / JCM 39069 / Hxd3) (Desulfococcus oleovorans), this protein is Formate--tetrahydrofolate ligase.